The following is a 439-amino-acid chain: Serine--tRNA ligase (439 aa).

Residue Thr-237 to Glu-239 participates in L-serine binding. An ATP-binding site is contributed by Arg-268–Glu-270. Residue Glu-291 coordinates L-serine. Glu-362–Ser-365 is a binding site for ATP. Ser-397 contacts L-serine.

The protein belongs to the class-II aminoacyl-tRNA synthetase family. Type-1 seryl-tRNA synthetase subfamily. In terms of assembly, homodimer. The tRNA molecule binds across the dimer.

The protein resides in the cytoplasm. It carries out the reaction tRNA(Ser) + L-serine + ATP = L-seryl-tRNA(Ser) + AMP + diphosphate + H(+). The catalysed reaction is tRNA(Sec) + L-serine + ATP = L-seryl-tRNA(Sec) + AMP + diphosphate + H(+). Its pathway is aminoacyl-tRNA biosynthesis; selenocysteinyl-tRNA(Sec) biosynthesis; L-seryl-tRNA(Sec) from L-serine and tRNA(Sec): step 1/1. Functionally, catalyzes the attachment of serine to tRNA(Ser). Is also able to aminoacylate tRNA(Sec) with serine, to form the misacylated tRNA L-seryl-tRNA(Sec), which will be further converted into selenocysteinyl-tRNA(Sec). The polypeptide is Serine--tRNA ligase (Afipia carboxidovorans (strain ATCC 49405 / DSM 1227 / KCTC 32145 / OM5) (Oligotropha carboxidovorans)).